Here is a 172-residue protein sequence, read N- to C-terminus: Putative phosphoesterase BAMEG_3349 (172 aa).

Histidine 34 serves as the catalytic Proton donor. Short sequence motifs (HXTX) lie at residues histidine 34–leucine 37 and histidine 115–isoleucine 118. Histidine 115 acts as the Proton acceptor in catalysis.

Belongs to the 2H phosphoesterase superfamily. YjcG family.

In Bacillus anthracis (strain CDC 684 / NRRL 3495), this protein is Putative phosphoesterase BAMEG_3349.